A 119-amino-acid chain; its full sequence is Ribonuclease P protein component (119 aa).

The protein belongs to the RnpA family. In terms of assembly, consists of a catalytic RNA component (M1 or rnpB) and a protein subunit.

It catalyses the reaction Endonucleolytic cleavage of RNA, removing 5'-extranucleotides from tRNA precursor.. Functionally, RNaseP catalyzes the removal of the 5'-leader sequence from pre-tRNA to produce the mature 5'-terminus. It can also cleave other RNA substrates such as 4.5S RNA. The protein component plays an auxiliary but essential role in vivo by binding to the 5'-leader sequence and broadening the substrate specificity of the ribozyme. The sequence is that of Ribonuclease P protein component from Salmonella arizonae (strain ATCC BAA-731 / CDC346-86 / RSK2980).